Consider the following 395-residue polypeptide: Major outer membrane protein P.IA (395 aa).

The signal sequence occupies residues 1–19 (MRKKLTALVLSALPLAAVA).

It belongs to the Gram-negative porin family. In terms of assembly, homotrimer.

It is found in the cell outer membrane. In terms of biological role, serves as a slightly cation selective porin. Major antigen on the gonococcal cell surface and it may have pathogenic properties in addition to its porin activity. In Neisseria meningitidis serogroup A / serotype 4A (strain DSM 15465 / Z2491), this protein is Major outer membrane protein P.IA (porA).